Consider the following 262-residue polypeptide: Sperm microtubule inner protein 6 (262 aa).

Belongs to the SPMIP6 family. As to quaternary structure, microtubule inner protein component of sperm flagellar doublet microtubules. Interacts with alpha-tubulin.

It localises to the cytoplasm. It is found in the cytoskeleton. The protein localises to the nucleus. The protein resides in the mitochondrion. Its subcellular location is the flagellum axoneme. May participate in intramanchette transport and midpiece formation of the sperm tail. May play a potential role in somatic cell proliferation. The polypeptide is Sperm microtubule inner protein 6 (SPMIP6) (Macaca fascicularis (Crab-eating macaque)).